A 257-amino-acid chain; its full sequence is Protein THYLAKOID ASSEMBLY 8-like, chloroplastic (257 aa).

The N-terminal 55 residues, 1 to 55 (MTAIRVCSRKFPTFASIFFQNITRNPSIHRISFSNLKPKTLLHPIPPKPFTVFVS), are a transit peptide targeting the chloroplast. 2 PPR repeats span residues 142–176 (DVFM…NLFP) and 177–211 (DSQT…PDPP).

Belongs to the PPR family. P subfamily.

The protein localises to the plastid. It is found in the chloroplast. Binds weakly to specific single strand RNA (ssRNA). The polypeptide is Protein THYLAKOID ASSEMBLY 8-like, chloroplastic (Arabidopsis thaliana (Mouse-ear cress)).